A 423-amino-acid chain; its full sequence is Maltoporin 1 (423 aa).

The signal sequence occupies residues M1–A23.

This sequence belongs to the porin LamB (TC 1.B.3) family. Homotrimer formed of three 18-stranded antiparallel beta-barrels, containing three independent channels.

Its subcellular location is the cell outer membrane. It carries out the reaction beta-maltose(in) = beta-maltose(out). Its function is as follows. Involved in the transport of maltose and maltodextrins. The sequence is that of Maltoporin 1 from Klebsiella pneumoniae subsp. pneumoniae (strain ATCC 700721 / MGH 78578).